The following is a 147-amino-acid chain: uncharacterized protein (147 aa).

It belongs to the limonene-1,2-epoxide hydrolase family.

This is an uncharacterized protein from Bacillus subtilis (strain 168).